A 217-amino-acid polypeptide reads, in one-letter code: MGGRVDHEYSYLFKMVLIGDSGVGKSNILSRFTRNHFSLDSKSTIGVEFATKSLQMEGKTIKAQIWDTAGQERYRAITSAYYRGAVGALLVYDITKRQSFDNVHRWLRELRDHADSSIVIMMVGNKSDLIHLRAVSEDEGKALAEKEGLFFLETSAMEAVNVEEAFQTIITEVYGIVNRKALAAKEAAAASAPLPSQGKTISIDSAAGNTKRACCSA.

Residues 19 to 26, 67 to 71, and 125 to 128 each bind GTP; these read GDSGVGKS, DTAGQ, and NKSD. S-geranylgeranyl cysteine attachment occurs at residues C214 and C215.

Belongs to the small GTPase superfamily. Rab family.

The protein resides in the cell membrane. The protein is Ras-related protein RGP2 (RGP2) of Oryza sativa subsp. japonica (Rice).